A 167-amino-acid polypeptide reads, in one-letter code: MFPMITGFMNYGQQTVRAARYIGQSFMITLSHVNRLPITIQYPYEKVIAAERFRGRIHFEFDKCIACEVCVRVCPIDLPVVDWKLETDIRKKQLLNYSIDFGICIFCGNCVEYCPTNCLSMTEEYELSTYDRHELNYNQIALGRLPMSVIDDYTIRTILNSPQIKNK.

4Fe-4S ferredoxin-type domains follow at residues 55–84 and 95–124; these read GRIHFEFDKCIACEVCVRVCPIDLPVVDWK and LNYSIDFGICIFCGNCVEYCPTNCLSMTEE. [4Fe-4S] cluster is bound by residues C64, C67, C70, C74, C104, C107, C110, and C114.

This sequence belongs to the complex I 23 kDa subunit family. NDH is composed of at least 16 different subunits, 5 of which are encoded in the nucleus. [4Fe-4S] cluster serves as cofactor.

It is found in the plastid. It localises to the chloroplast thylakoid membrane. It carries out the reaction a plastoquinone + NADH + (n+1) H(+)(in) = a plastoquinol + NAD(+) + n H(+)(out). The catalysed reaction is a plastoquinone + NADPH + (n+1) H(+)(in) = a plastoquinol + NADP(+) + n H(+)(out). NDH shuttles electrons from NAD(P)H:plastoquinone, via FMN and iron-sulfur (Fe-S) centers, to quinones in the photosynthetic chain and possibly in a chloroplast respiratory chain. The immediate electron acceptor for the enzyme in this species is believed to be plastoquinone. Couples the redox reaction to proton translocation, and thus conserves the redox energy in a proton gradient. This Morus indica (Mulberry) protein is NAD(P)H-quinone oxidoreductase subunit I, chloroplastic.